The primary structure comprises 333 residues: Glyoxylate reductase (333 aa).

Residues F158–I161, S180–S182, and I239–R241 contribute to the NADP(+) site. Active-site residues include R241 and E270. Residue H288 is the Proton donor of the active site. Residue H288 to G290 coordinates NADP(+).

Belongs to the D-isomer specific 2-hydroxyacid dehydrogenase family. GyaR subfamily. As to quaternary structure, homodimer.

The protein localises to the cytoplasm. It carries out the reaction glycolate + NAD(+) = glyoxylate + NADH + H(+). This is Glyoxylate reductase from Thermococcus kodakarensis (strain ATCC BAA-918 / JCM 12380 / KOD1) (Pyrococcus kodakaraensis (strain KOD1)).